Here is a 508-residue protein sequence, read N- to C-terminus: Pentatricopeptide repeat-containing protein At3g04130, mitochondrial (508 aa).

Residues 1–74 constitute a mitochondrion transit peptide; it reads MSWLIQNRIG…DSEDDVFKRL (74 aa). PPR repeat units follow at residues 120-150, 154-188, 189-219, 223-257, 258-292, 293-327, 328-363, 364-398, 400-434, and 436-470; these read SSDA…MRGD, TLNT…GLEK, NTES…LKSH, NAHT…GFRP, CVIS…GSPP, NSIT…GCKP, DSLF…GVSI, NTST…NLCN, DVHT…HHLS, and DEST…DITP.

It belongs to the PPR family. P subfamily.

The protein localises to the mitochondrion. This chain is Pentatricopeptide repeat-containing protein At3g04130, mitochondrial, found in Arabidopsis thaliana (Mouse-ear cress).